The sequence spans 322 residues: Pyridoxal kinase (322 aa).

M1 carries the N-acetylmethionine modification. 2 residues coordinate pyridoxal: S22 and T57. Pyridoxal 5'-phosphate is bound at residue T57. S69 is modified (phosphoserine). D123 is a binding site for ATP. Position 123 (D123) interacts with Na(+). Residue D128 coordinates Mg(2+). T158 contacts Na(+). Residue 160 to 163 (NQFE) coordinates ATP. S174 carries the post-translational modification Phosphoserine. Residue T196 coordinates Na(+). ATP is bound at residue 196-197 (TS). Residue S223 is modified to Phosphoserine. ATP is bound by residues 236-238 (VDA) and T243. 244 to 245 (GD) is a binding site for pyridoxal 5'-phosphate. D245 acts as the Proton acceptor in catalysis. Position 295 is a phosphoserine (S295).

It belongs to the pyridoxine kinase family. As to quaternary structure, homodimer. Zn(2+) is required as a cofactor. It depends on Mg(2+) as a cofactor. Post-translationally, the N-terminus is blocked.

The protein resides in the cytoplasm. It is found in the cytosol. The catalysed reaction is pyridoxal + ATP = pyridoxal 5'-phosphate + ADP + H(+). It carries out the reaction pyridoxamine + ATP = pyridoxamine 5'-phosphate + ADP + H(+). It catalyses the reaction pyridoxine + ATP = pyridoxine 5'-phosphate + ADP + H(+). Its pathway is cofactor metabolism; pyridoxal 5'-phosphate salvage; pyridoxal 5'-phosphate from pyridoxal: step 1/1. It participates in cofactor metabolism; pyridoxal 5'-phosphate salvage; pyridoxine 5'-phosphate from pyridoxine: step 1/1. It functions in the pathway cofactor metabolism; pyridoxal 5'-phosphate salvage; pyridoxamine 5'-phosphate from pyridoxamine: step 1/1. With respect to regulation, activity is increased in the presence of K(+)or Na(+). Its function is as follows. Catalyzes the phosphorylation of the dietary vitamin B6 vitamers pyridoxal (PL), pyridoxine (PN) and pyridoxamine (PM) to form pyridoxal 5'-phosphate (PLP), pyridoxine 5'-phosphate (PNP) and pyridoxamine 5'-phosphate (PMP), respectively. PLP is the active form of vitamin B6, and acts as a cofactor for over 140 different enzymatic reactions. This Sus scrofa (Pig) protein is Pyridoxal kinase (PDXK).